Reading from the N-terminus, the 560-residue chain is MAIATSAQLARALYDNTAESPQELSFRRGDVLRVLQREGAGGLDGWCLCSLHGQQGIVPANRVKLLPAGPAPKPSLCPASPTQPGSSCPTPERGCEEQEVYVIPPPARPCSASGLPARSCSPSSDSIYKVPRGNGMQLTASRDVAEVYDVPPNILRAPSSCPYDSPASFSCPVAPVVPQPPREDEAPYDVPLALKPPAELERDPEWEGGREPGPPLYAAPSNLKRASALLNLYEAPEELLANGESRDADEGIYDVPLLGPEPPSPEPPVASSSTDLDTVAQLPTRSSPPQHRPRLPSTESLSRRPLPALPVSEAPAPSPAPSPAPGRKGSIQDRPLPPPPPCLPGYGGLKPEGDPECREVANDPAGPHNEYEGIPMAEEYDYVHLKGVDTAQGSRPLDKAFPVDPELLERGLAERKEALSPEEPLVLSTGDLQLLHFYAGQCQSHYSALQAAVAALVASTQANQPPCLFVPHGKRVVVAAHRLVFVGDTLGRLAASAALRAQVGAAGTMLAQTLRATVLAVKGAALGYPSDTAVQEMARCVAELAGQALRFTTLLDGLLP.

The SH3 domain maps to Thr5–Ala68. 2 disordered regions span residues Val176 to Ala219 and Ala241 to Glu372. Positions Ala198 to Arg210 are enriched in basic and acidic residues. Tyr253 is modified (phosphotyrosine; by SRC). A compositionally biased stretch (pro residues) spans Gly259–Pro268. Short sequence motifs (SH3-binding) lie at residues Arg304–Pro310 and Arg334–Pro340. The span at Pro305 to Pro315 shows a compositional bias: low complexity. Positions Pro351–Ala361 are enriched in basic and acidic residues. Residues Phe437–Gly487 are divergent helix-loop-helix motif.

It belongs to the CAS family. In terms of processing, phosphorylated on multiple tyrosine residues. Phosphorylated on tyrosines by FYN and SRC. As to expression, widely expressed. Higher levels found in placenta and embryo. Lower levels found in brain, brainstem, muscle and lung. No expression in liver and intestine.

In terms of biological role, docking protein which plays a central coordinating role for tyrosine-kinase-based signaling related to cell adhesion. May serve as an activator of SRC and a downstream effector. Interacts with the SH3 domain of FYN and with CRK, SRC, and YES. The sequence is that of Embryonal Fyn-associated substrate (Efs) from Mus musculus (Mouse).